A 456-amino-acid chain; its full sequence is Histidine--tRNA ligase (456 aa).

It belongs to the class-II aminoacyl-tRNA synthetase family. As to quaternary structure, homodimer.

The protein localises to the cytoplasm. It carries out the reaction tRNA(His) + L-histidine + ATP = L-histidyl-tRNA(His) + AMP + diphosphate + H(+). The chain is Histidine--tRNA ligase from Borrelia garinii subsp. bavariensis (strain ATCC BAA-2496 / DSM 23469 / PBi) (Borreliella bavariensis).